The following is a 1015-amino-acid chain: PHD finger protein 20-like protein 1 (1015 aa).

The Tudor 1 domain occupies 11-71 (ITFEIGARLE…SNRLRPLERP (61 aa)). Glycyl lysine isopeptide (Lys-Gly) (interchain with G-Cter in SUMO2) cross-links involve residues lysine 75 and lysine 79. The region spanning 85–141 (FDFKAGEEVLARWTDCRYYPAKIEAINKEGTFTVQFYDGVIRCLKRMHIKAMPEDAK) is the Tudor 2 domain. Disordered stretches follow at residues 183 to 206 (AKNK…RDGG) and 309 to 367 (EQAI…KAPK). Composition is skewed to polar residues over residues 186–197 (KTGSKPRTSANS) and 315–346 (KPQS…SSGK). Serine 368 is modified (phosphoserine). Disordered regions lie at residues 389–455 (VINK…SSVP) and 478–513 (CGSE…NPTS). Positions 404 to 415 (PCKHSERRRRSQ) are enriched in basic residues. At serine 432 the chain carries Phosphoserine. Composition is skewed to polar residues over residues 443–453 (SISSQNQQESS) and 480–489 (SEVTGSQAPD). Lysine 530 is covalently cross-linked (Glycyl lysine isopeptide (Lys-Gly) (interchain with G-Cter in SUMO2)). The segment covering 539 to 565 (EKTSTAFGKRKEKDKERKEKRDKDHYK) has biased composition (basic and acidic residues). The interval 539–585 (EKTSTAFGKRKEKDKERKEKRDKDHYKPKQKKKKKKKKKSKQHDYSD) is disordered. A compositionally biased stretch (basic residues) spans 566 to 579 (PKQKKKKKKKKKSK). Residues 681–729 (IVRCICELDEENGFMIQCEECLCWQHSVCMGLLEDSIPEQYICYICRDP) form a PHD-type zinc finger. Lysine 849 participates in a covalent cross-link: Glycyl lysine isopeptide (Lys-Gly) (interchain with G-Cter in SUMO2). Residues 859 to 878 (HSYQKPQSFSQDCHSLTDPG) show a composition bias toward polar residues. Residues 859–889 (HSYQKPQSFSQDCHSLTDPGSSDDDDVSSFE) form a disordered region. Positions 879–889 (SSDDDDVSSFE) are enriched in acidic residues. Lysine 907 carries the N6-acetyllysine modification.

Interacts with methylated DNMT1 (DNMT1K142me1). Interacts with SOX2.

The protein resides in the nucleus. Its function is as follows. Is a negative regulator of proteasomal degradation of a set of methylated proteins, including DNMT1 and SOX2. Involved in the maintainance of embryonic stem cells pluripotency, through the regulation of SOX2 levels. This is PHD finger protein 20-like protein 1 (Phf20l1) from Rattus norvegicus (Rat).